We begin with the raw amino-acid sequence, 298 residues long: Probable endonuclease 4 (298 aa).

The Zn(2+) site is built by His69, His111, Glu146, Asp180, His183, His215, Asp228, His230, and Glu260.

This sequence belongs to the AP endonuclease 2 family. Zn(2+) is required as a cofactor.

It catalyses the reaction Endonucleolytic cleavage to 5'-phosphooligonucleotide end-products.. Endonuclease IV plays a role in DNA repair. It cleaves phosphodiester bonds at apurinic or apyrimidinic (AP) sites, generating a 3'-hydroxyl group and a 5'-terminal sugar phosphate. This Bacillus mycoides (strain KBAB4) (Bacillus weihenstephanensis) protein is Probable endonuclease 4.